The sequence spans 1131 residues: Phytochrome A (1131 aa).

The tract at residues M1–R23 is disordered. The 186-residue stretch at S219–F404 folds into the GAF domain. C324 is a binding site for phytochromobilin. PAS domains follow at residues V620 to R690 and V750 to E834. Residues Y904–A1124 enclose the Histidine kinase domain.

This sequence belongs to the phytochrome family. As to quaternary structure, homodimer. In terms of processing, contains one covalently linked phytochromobilin chromophore.

Functionally, regulatory photoreceptor which exists in two forms that are reversibly interconvertible by light: the Pr form that absorbs maximally in the red region of the spectrum and the Pfr form that absorbs maximally in the far-red region. Photoconversion of Pr to Pfr induces an array of morphogenic responses, whereas reconversion of Pfr to Pr cancels the induction of those responses. Pfr controls the expression of a number of nuclear genes including those encoding the small subunit of ribulose-bisphosphate carboxylase, chlorophyll A/B binding protein, protochlorophyllide reductase, rRNA, etc. It also controls the expression of its own gene(s) in a negative feedback fashion. The polypeptide is Phytochrome A (PHYA1) (Zea mays (Maize)).